The following is a 336-amino-acid chain: Atypical chemokine receptor 1 (336 aa).

Residues 1 to 63 lie on the Extracellular side of the membrane; it reads MGNCLHQAEL…CNLLDDSSLP (63 aa). Asn16, Asn27, and Asn33 each carry an N-linked (GlcNAc...) asparagine glycan. Cystine bridges form between Cys51–Cys276 and Cys129–Cys195. Residues 64 to 84 form a helical membrane-spanning segment; the sequence is FFILASVLGILASSTVLFLLF. The Cytoplasmic segment spans residues 85-95; sequence RPLFRWQLCPG. Residues 96-116 traverse the membrane as a helical segment; the sequence is WPVLAQLAVGSTLFSIVVPIL. Over 117 to 129 the chain is Extracellular; it reads APGLGNTRSSAPC. The chain crosses the membrane as a helical span at residues 130-153; that stretch reads SLGYCVWYGSAFAQALLLGCHASL. Residues 154–166 lie on the Cytoplasmic side of the membrane; it reads GPKLGAGQVPGLT. The chain crosses the membrane as a helical span at residues 167 to 187; it reads LGLSVGLWGAAALLTLPITLA. The Extracellular portion of the chain corresponds to 188–207; it reads SDASDGLCTPIYSTELKALQ. A helical transmembrane segment spans residues 208–228; that stretch reads ATHTVACFAIFVLLPLGLFGA. Over 229–244 the chain is Cytoplasmic; sequence KGLKKVLGMGPGPWMN. The chain crosses the membrane as a helical span at residues 245-265; sequence ILWVWFIFWWPHGVVLGLDFL. At 266–287 the chain is on the extracellular side; that stretch reads VRSKLLLLPTCLAQQVLDLLLN. The chain crosses the membrane as a helical span at residues 288–308; that stretch reads LAEALAIVHCVATPLLLALFC. The Cytoplasmic portion of the chain corresponds to 309-336; that stretch reads HQATRTLVPSLPLPERWSSPVDTLGSKS.

Belongs to the G-protein coupled receptor 1 family. Atypical chemokine receptor subfamily.

The protein resides in the early endosome. Its subcellular location is the recycling endosome. It is found in the membrane. In terms of biological role, atypical chemokine receptor that controls chemokine levels and localization via high-affinity chemokine binding that is uncoupled from classic ligand-driven signal transduction cascades, resulting instead in chemokine sequestration, degradation, or transcytosis. Also known as interceptor (internalizing receptor) or chemokine-scavenging receptor or chemokine decoy receptor. Has a promiscuous chemokine-binding profile, interacting with inflammatory chemokines of both the CXC and the CC subfamilies but not with homeostatic chemokines. Acts as a receptor for chemokines including CCL2, CCL5, CCL7, CCL11, CCL13, CCL14, CCL17, CXCL5, CXCL6, IL8/CXCL8, CXCL11, GRO, RANTES, MCP-1 and TARC. May regulate chemokine bioavailability and, consequently, leukocyte recruitment through two distinct mechanisms: when expressed in endothelial cells, it sustains the abluminal to luminal transcytosis of tissue-derived chemokines and their subsequent presentation to circulating leukocytes; when expressed in erythrocytes, serves as blood reservoir of cognate chemokines but also as a chemokine sink, buffering potential surges in plasma chemokine levels. The protein is Atypical chemokine receptor 1 (ACKR1) of Saguinus imperator (Emperor tamarin).